We begin with the raw amino-acid sequence, 318 residues long: Protoheme IX farnesyltransferase (318 aa).

9 helical membrane-spanning segments follow: residues leucine 37–isoleucine 57, alanine 58–tryptophan 78, valine 100–methionine 120, valine 122–valine 142, isoleucine 155–glycine 175, phenylalanine 182–tyrosine 202, isoleucine 228–alanine 248, leucine 251–tryptophan 271, and isoleucine 291–glycine 311.

It belongs to the UbiA prenyltransferase family. Protoheme IX farnesyltransferase subfamily.

The protein localises to the cell inner membrane. It carries out the reaction heme b + (2E,6E)-farnesyl diphosphate + H2O = Fe(II)-heme o + diphosphate. It participates in porphyrin-containing compound metabolism; heme O biosynthesis; heme O from protoheme: step 1/1. Functionally, converts heme B (protoheme IX) to heme O by substitution of the vinyl group on carbon 2 of heme B porphyrin ring with a hydroxyethyl farnesyl side group. The sequence is that of Protoheme IX farnesyltransferase from Parvibaculum lavamentivorans (strain DS-1 / DSM 13023 / NCIMB 13966).